Reading from the N-terminus, the 409-residue chain is Testis-expressed protein 13A (409 aa).

The tract at residues 92–408 (WLHGFAKLHK…CGKGIWLQKP (317 aa)) is required for repression of transcription. The interval 347-374 (GGPHRIDHQEHPRDRRYSEPHQQRPPVY) is disordered. Residues 348 to 368 (GPHRIDHQEHPRDRRYSEPHQ) are compositionally biased toward basic and acidic residues. The RanBP2-type zinc-finger motif lies at 376–400 (RPGDWDCPWCNAVNFSRRDTCFDCG). Residues Cys-382, Cys-385, Cys-396, and Cys-399 each contribute to the Zn(2+) site.

Belongs to the TEX13 family. In terms of assembly, interacts with CNOT1; the interaction may inhibit CNOT1 binding to mRNA and subsequently CNOT1-mediated mRNA degradation. In terms of tissue distribution, testis specific.

Binds to ssRNA containing the consensus sequence 5'-AGGUAA-3'. Plays a role in transcriptional repression. Required for rapid sperm motility and timely degradation of mRNA via its interaction with CNOT1. The chain is Testis-expressed protein 13A from Homo sapiens (Human).